A 127-amino-acid chain; its full sequence is Small ribosomal subunit protein uS13 (127 aa).

The segment at 90–127 is disordered; that stretch reads RRHRQGLPVRGQRTRTNARTRRGRRLTVAGKKKTPAKK. The segment covering 101 to 127 has biased composition (basic residues); the sequence is QRTRTNARTRRGRRLTVAGKKKTPAKK.

The protein belongs to the universal ribosomal protein uS13 family. As to quaternary structure, part of the 30S ribosomal subunit. Forms a loose heterodimer with protein S19. Forms two bridges to the 50S subunit in the 70S ribosome.

Located at the top of the head of the 30S subunit, it contacts several helices of the 16S rRNA. In the 70S ribosome it contacts the 23S rRNA (bridge B1a) and protein L5 of the 50S subunit (bridge B1b), connecting the 2 subunits; these bridges are implicated in subunit movement. Contacts the tRNAs in the A and P-sites. The sequence is that of Small ribosomal subunit protein uS13 from Synechocystis sp. (strain ATCC 27184 / PCC 6803 / Kazusa).